A 662-amino-acid chain; its full sequence is MNQFKVISKFNPTGDQPKAIKSIAKGIEKREKFQTLIGVTGSGKTFTMANIIEKVQKPTLVLAHNKTLAAQLCSEFREFFPNNAVEYFVSYYDYYQPEAYVAQSDTYIEKDASINDEIDKLRHSATSALFERKDVIIVASVSCIYGLGNPEEYKKLTISLREGMEKDRDEIIKKLVEIQYERNDIDFSRGTFRVKGDVLDIFPASSSSKAVRVEFFGDEIDRIKEFDVLTGETITKLKHISIFPASHFATSKDRLEVAIKDIEEELEERVKELVSQDKILEAQRLKQRTNFDIEMMREVGYCTGIENYSRVLDGRAKGTPPQTLLDYFPQDFLLFIDESHVTLPQVKAMQAGDKSRKDSLVEYGFRLPCAYDNRPLTFKEFENKLNQVVFVSATPAKYELEYSTNTAEQVIRPTGLLDPEIIVKPVKGQIDDLYTSIQETIKRGFRILVTTLTKKMAEDLTDYLKEMGVKTRYLHSDIDTIERMKIIHDLRKGEFHVLVGINLLREGLDIPEVALVTILDADKEGFLRSETSLIQTVGRAARNSESKVIMYGDVITKSMEKTIKETNRRRKIQMEYNEEYGIVPKTIIKDIREVIQISDIAEERKEYDNLNEALKSYNNDIDKLIEKYEEEMKEAAQNLQFEKAAHLRDVIYKLKKDKETEL.

Residues 25–182 (KGIEKREKFQ…KKLVEIQYER (158 aa)) enclose the Helicase ATP-binding domain. ATP is bound at residue 38–45 (GVTGSGKT). Residues 91–114 (YYDYYQPEAYVAQSDTYIEKDASI) carry the Beta-hairpin motif. The 167-residue stretch at 429–595 (QIDDLYTSIQ…TIIKDIREVI (167 aa)) folds into the Helicase C-terminal domain. Residues 622–657 (DKLIEKYEEEMKEAAQNLQFEKAAHLRDVIYKLKKD) form the UVR domain.

It belongs to the UvrB family. Forms a heterotetramer with UvrA during the search for lesions. Interacts with UvrC in an incision complex.

It localises to the cytoplasm. Its function is as follows. The UvrABC repair system catalyzes the recognition and processing of DNA lesions. A damage recognition complex composed of 2 UvrA and 2 UvrB subunits scans DNA for abnormalities. Upon binding of the UvrA(2)B(2) complex to a putative damaged site, the DNA wraps around one UvrB monomer. DNA wrap is dependent on ATP binding by UvrB and probably causes local melting of the DNA helix, facilitating insertion of UvrB beta-hairpin between the DNA strands. Then UvrB probes one DNA strand for the presence of a lesion. If a lesion is found the UvrA subunits dissociate and the UvrB-DNA preincision complex is formed. This complex is subsequently bound by UvrC and the second UvrB is released. If no lesion is found, the DNA wraps around the other UvrB subunit that will check the other stand for damage. The sequence is that of UvrABC system protein B from Clostridium botulinum (strain Kyoto / Type A2).